The sequence spans 773 residues: MAEAHQAVAFQFTVTPDGIDLRLSHEALKQICLSGLHSWKKKFIRFKNGIITGVFPANPSSWLIVVVGVISSMHAKVDPSLGMIAKISRTLDTTGRMSSQTKNIVSGVLFGTGLWVAVIMTMRYSLKVLLSYHGWMFAEHGKMSRSTKIWMAMVKVLSGRKPMLYSFQTSLPRLPVPAVKDTVSRYLESVRPLMKEEDFQRMTALAQDFAVNLGPKLQWYLKLKSWWATNYVSDWWEEYIYLRGRGPLMVNSNYYAMEMLYITPTHIQAARAGNTIHAILLYRRTLDREELKPIRLLGSTIPLCSAQWERLFNTSRIPGEETDTIQHIKDSRHIVVYHRGRYFKVWLYHDGRLLRPRELEQQMQQILDDPSEPQPGEAKLAALTAADRVPWAKCRQTYFARGKNKQSLDAVEKAAFFVTLDESEQGYREEDPEASIDSYAKSLLHGRCFDRWFDKSITFVVFKNSKIGINAEHSWADAPVVGHLWEYVMATDVFQLGYSEDGHCKGDTNPNIPKPTRLQWDIPGECQEVIDASLSSASLLANDVDLHSFPFDSFGKGLIKKCRTSPDAFIQLALQLAHYKDMGKFCLTYEASMTRLFREGRTETVRSCTMESCNFVQAMMDPKSTAEQRLKLFKIACEKHQHLYRLAMTGAGIDRHLFCLYVVSKYLAVDSPFLKEVLSEPWRLSTSQTPQQQVELFDFEKNPDYVSCGGGFGPVADDGYGVSYIIVGENFIHFHISSKFSSPETDSHRFGKHLRQAMMDIITLFGLTINSKK.

Alanine 2 is modified (N-acetylalanine). At 2–47 the chain is on the cytoplasmic side; the sequence is AEAHQAVAFQFTVTPDGIDLRLSHEALKQICLSGLHSWKKKFIRFK. Residues 48-73 traverse the membrane as a helical segment; the sequence is NGIITGVFPANPSSWLIVVVGVISSM. The Mitochondrial intermembrane portion of the chain corresponds to 74–102; it reads HAKVDPSLGMIAKISRTLDTTGRMSSQTK. A helical membrane pass occupies residues 103 to 122; that stretch reads NIVSGVLFGTGLWVAVIMTM. Over 123 to 773 the chain is Cytoplasmic; it reads RYSLKVLLSY…LFGLTINSKK (651 aa). The residue at position 282 (tyrosine 282) is a 3'-nitrotyrosine. Histidine 473 functions as the Proton acceptor in the catalytic mechanism. Residue 555–567 participates in CoA binding; that stretch reads GKGLIKKCRTSPD. Threonine 588 bears the Phosphothreonine mark. Tyrosine 589 is subject to 3'-nitrotyrosine. (R)-carnitine-binding residues include tyrosine 589 and threonine 602. Phosphothreonine is present on threonine 604. Phosphoserine occurs at positions 741 and 747.

The protein belongs to the carnitine/choline acetyltransferase family. As to quaternary structure, homohexamer and homotrimer. Identified in a complex that contains at least CPT1A, ACSL1 and VDAC1. Also identified in complexes with ACSL1 and VDAC2 and VDAC3. Interacts with ZDHHC4. In terms of tissue distribution, liver and kidney.

It localises to the mitochondrion outer membrane. It carries out the reaction (R)-carnitine + hexadecanoyl-CoA = O-hexadecanoyl-(R)-carnitine + CoA. The catalysed reaction is succinyl-CoA + L-lysyl-[protein] = N(6)-succinyl-L-lysyl-[protein] + CoA + H(+). It participates in lipid metabolism; fatty acid beta-oxidation. With respect to regulation, inhibited by malonyl-CoA. Functionally, catalyzes the transfer of the acyl group of long-chain fatty acid-CoA conjugates onto carnitine, an essential step for the mitochondrial uptake of long-chain fatty acids and their subsequent beta-oxidation in the mitochondrion. Also possesses a lysine succinyltransferase activity that can regulate enzymatic activity of substrate proteins such as ENO1 and metabolism independent of its classical carnitine O-palmitoyltransferase activity. Plays an important role in hepatic triglyceride metabolism. Also plays a role in inducible regulatory T-cell (iTreg) differentiation once activated by butyryl-CoA that antagonizes malonyl-CoA-mediated CPT1A repression. Sustains the IFN-I response by recruiting ZDHCC4 to palmitoylate MAVS at the mitochondria leading to MAVS stabilization and activation. The chain is Carnitine O-palmitoyltransferase 1, liver isoform (Cpt1a) from Rattus norvegicus (Rat).